The following is a 610-amino-acid chain: Elongation factor 4 (610 aa).

The tr-type G domain maps to 15-197 (KSIRNFSIIA…RIINDIPYPK (183 aa)). GTP contacts are provided by residues 27–32 (DHGKST) and 144–147 (NKID).

It belongs to the TRAFAC class translation factor GTPase superfamily. Classic translation factor GTPase family. LepA subfamily.

It is found in the cell membrane. It catalyses the reaction GTP + H2O = GDP + phosphate + H(+). Required for accurate and efficient protein synthesis under certain stress conditions. May act as a fidelity factor of the translation reaction, by catalyzing a one-codon backward translocation of tRNAs on improperly translocated ribosomes. Back-translocation proceeds from a post-translocation (POST) complex to a pre-translocation (PRE) complex, thus giving elongation factor G a second chance to translocate the tRNAs correctly. Binds to ribosomes in a GTP-dependent manner. The protein is Elongation factor 4 of Buchnera aphidicola subsp. Acyrthosiphon pisum (strain 5A).